The following is a 380-amino-acid chain: Zinc finger protein neuro-d4 (380 aa).

The segment at 132–164 is disordered; sequence ALLDCQKPPPGDFAHDAEGDEMEDDAPRRKNKA. A C2H2-type zinc finger spans residues 190-213; that stretch reads YVCDICGKRYKNRPGLSYHYTHTH. 2 consecutive PHD-type zinc fingers follow at residues 262-321 and 318-368; these read EGPC…CKNC and CKNC…CLRQ. The Zn(2+) site is built by C265, C268, C286, C289, H294, C297, C315, C318, C321, C324, C336, C339, H344, C347, C362, and C365.

It belongs to the requiem/DPF family. Component of neuron-specific chromatin remodeling complex (nBAF complex), a subfamily of ATP-dependent SWI/SNF chromatin remodeling complexes.

The protein localises to the cytoplasm. Its subcellular location is the nucleus. May have an important role in developing neurons by participating in regulation of cell survival, possibly as a neurospecific transcription factor. Belongs to the neuron-specific chromatin remodeling complex (nBAF complex) and plays a role in neural development. This chain is Zinc finger protein neuro-d4, found in Gallus gallus (Chicken).